The primary structure comprises 493 residues: Putative glycerol-3-phosphate transporter 5 (493 aa).

12 helical membrane passes run 25 to 44 (FTFHQILVLIITFTAYASFH), 83 to 103 (LGELDLAFLSSYALGMYFAGH), 113 to 133 (FLVFGMMGSGILTLVFGLGYW), 145 to 165 (VQIVCGLFQSIGWPCVVSVVG), 185 to 205 (SVGNILGSVIASSVLDFGWGW), 207 to 227 (FVLPGVLVLVSGVVVFMFLVV), 292 to 312 (FCLFFSKLVAYTFLYWLPYYL), 328 to 348 (GILSTVFDVGGVLGGISAGFI), 352 to 372 (IKARALTSITFLALSIPALIM), 375 to 395 (VYGSVSMFINIVLMFISGLLV), 428 to 448 (AIIDGTGSVGAALGPLLAGYI), and 452 to 472 (GWNSVFFMLIVSIFFAGLFLV).

Belongs to the major facilitator superfamily. Organophosphate:Pi antiporter (OPA) (TC 2.A.1.4) family.

It is found in the membrane. This chain is Putative glycerol-3-phosphate transporter 5, found in Arabidopsis thaliana (Mouse-ear cress).